The primary structure comprises 101 residues: MAKKSKIAKNDRRQETVARYATRRAELTEIIRRPSTPEAERRAAQQELRRQPRDASATRVRNRDSVDGRPRGYHRAFGLSRVNLREQAHAGFLPGVRKSSW.

2 disordered regions span residues 1 to 20 and 28 to 72; these read MAKKSKIAKNDRRQETVARY and TEII…RPRG. 2 stretches are compositionally biased toward basic and acidic residues: residues 38 to 53 and 61 to 70; these read EAERRAAQQELRRQPR and RNRDSVDGRP.

It belongs to the universal ribosomal protein uS14 family. As to quaternary structure, part of the 30S ribosomal subunit. Contacts proteins S3 and S10.

Binds 16S rRNA, required for the assembly of 30S particles and may also be responsible for determining the conformation of the 16S rRNA at the A site. The polypeptide is Small ribosomal subunit protein uS14A (Streptomyces avermitilis (strain ATCC 31267 / DSM 46492 / JCM 5070 / NBRC 14893 / NCIMB 12804 / NRRL 8165 / MA-4680)).